The sequence spans 126 residues: Fluoride-specific ion channel FluC (126 aa).

A run of 4 helical transmembrane segments spans residues 3–23 (PYLLLAVGTGGFVGAILRFLI), 37–57 (VGTLSVNVLGSFIIGFLALYF), 68–88 (LVITGMLGALTTFSTFSLETV), and 101–121 (TNITLNVFLCVVATMLGMMLF). The Na(+) site is built by Gly75 and Thr78.

It belongs to the fluoride channel Fluc/FEX (TC 1.A.43) family.

It is found in the cell inner membrane. The catalysed reaction is fluoride(in) = fluoride(out). Na(+) is not transported, but it plays an essential structural role and its presence is essential for fluoride channel function. In terms of biological role, fluoride-specific ion channel. Important for reducing fluoride concentration in the cell, thus reducing its toxicity. The sequence is that of Fluoride-specific ion channel FluC from Sulfurovum sp. (strain NBC37-1).